A 444-amino-acid polypeptide reads, in one-letter code: Chromosome partition protein MukF (444 aa).

Positions 212 to 240 are leucine-zipper; the sequence is LDETSGNLRELQDTLNAAGDKLQAQLLRI.

Belongs to the MukF family. Interacts, and probably forms a ternary complex, with MukE and MukB via its C-terminal region. The complex formation is stimulated by calcium or magnesium. It is required for an interaction between MukE and MukB.

The protein resides in the cytoplasm. It is found in the nucleoid. Functionally, involved in chromosome condensation, segregation and cell cycle progression. May participate in facilitating chromosome segregation by condensation DNA from both sides of a centrally located replisome during cell division. Not required for mini-F plasmid partitioning. Probably acts via its interaction with MukB and MukE. Overexpression results in anucleate cells. It has a calcium binding activity. The sequence is that of Chromosome partition protein MukF from Haemophilus influenzae (strain ATCC 51907 / DSM 11121 / KW20 / Rd).